Here is a 461-residue protein sequence, read N- to C-terminus: MPIKRMWGGRFEEAGDQLVNQFNASISFDQEMAQEDIEGSLAHVKMLKETQILSAEDADKIIAGLKKLRERLTSEGLPFSIDNEDIHMNIEALLTEEIGPVAGKLHTGRSRNDQVATDLHLYVKKRLPIIINELKKLQAELVDKAAENVETIMPGYTHMQHAQPISYGHYLMAYFQMFQRDVERFEFNQQHTDLSPLGAAALAGTTFPIDRQLSAKYLGFAGPYHNSLDAVSDRDFALEFLSNASILMMHLSRLCEELIYWCSYEFGYLELADSYSTGSSIMPQKKNPDMAELIRGKVGRVYGDLFSLLTTMKGLPLAYNKDMQEDKEGLFDAVKTILPSIKIMTGMIATLQVKKEAMEHATHHDFSNATELADYLATKGIPFREAHEIVGELVLKGLKTGTNLVDIPLDEYKKISPKIEEDVYTCLQPKVAVERRNSYGGTGFDQVRQQIKDAKKILEGK.

It belongs to the lyase 1 family. Argininosuccinate lyase subfamily.

It localises to the cytoplasm. The enzyme catalyses 2-(N(omega)-L-arginino)succinate = fumarate + L-arginine. It participates in amino-acid biosynthesis; L-arginine biosynthesis; L-arginine from L-ornithine and carbamoyl phosphate: step 3/3. This Limosilactobacillus reuteri subsp. reuteri (strain JCM 1112) (Lactobacillus reuteri) protein is Argininosuccinate lyase.